The chain runs to 576 residues: 2-isopropylmalate synthase (576 aa).

The region spanning 31-305 is the Pyruvate carboxyltransferase domain; sequence PIWMSTDLRD…DPGLDFSHVN (275 aa). The Mg(2+) site is built by Asp-40, His-244, His-246, and Asn-280. The interval 437–576 is regulatory domain; it reads ADGPIGYVSH…RGMAPSMELA (140 aa).

It belongs to the alpha-IPM synthase/homocitrate synthase family. LeuA type 2 subfamily. In terms of assembly, homodimer. Mg(2+) is required as a cofactor.

The protein resides in the cytoplasm. It carries out the reaction 3-methyl-2-oxobutanoate + acetyl-CoA + H2O = (2S)-2-isopropylmalate + CoA + H(+). It participates in amino-acid biosynthesis; L-leucine biosynthesis; L-leucine from 3-methyl-2-oxobutanoate: step 1/4. Its function is as follows. Catalyzes the condensation of the acetyl group of acetyl-CoA with 3-methyl-2-oxobutanoate (2-ketoisovalerate) to form 3-carboxy-3-hydroxy-4-methylpentanoate (2-isopropylmalate). This chain is 2-isopropylmalate synthase, found in Ralstonia nicotianae (strain ATCC BAA-1114 / GMI1000) (Ralstonia solanacearum).